Consider the following 314-residue polypeptide: Malate dehydrogenase (314 aa).

Residues 11–16 (GSGNIG) and aspartate 35 each bind NAD(+). The substrate site is built by arginine 84 and arginine 90. Residues asparagine 97 and 120 to 122 (ITN) contribute to the NAD(+) site. Positions 122 and 153 each coordinate substrate. The active-site Proton acceptor is histidine 177.

Belongs to the LDH/MDH superfamily. MDH type 3 family.

It carries out the reaction (S)-malate + NAD(+) = oxaloacetate + NADH + H(+). In terms of biological role, catalyzes the reversible oxidation of malate to oxaloacetate. This chain is Malate dehydrogenase, found in Rickettsia canadensis (strain McKiel).